A 588-amino-acid chain; its full sequence is Endogenous retrovirus group K member 7 Env polyprotein (588 aa).

Residues 355 to 375 (FIFTLIAVIMGLIAVTATAAV) are fusion peptide. The chain crosses the membrane as a helical span at residues 522 to 542 (IGSTTIINLILILVCLFCLLL).

This sequence belongs to the beta type-B retroviral envelope protein family. HERV class-II K(HML-2) env subfamily. In terms of assembly, the surface (SU) and transmembrane (TM) proteins form a heterodimer. SU and TM are attached by noncovalent interactions or by a labile interchain disulfide bond. Specific enzymatic cleavages in vivo yield the mature SU and TM proteins. Expressed in lung, placenta, testis and peripheral blood lymphocytes.

The protein resides in the virion. Its subcellular location is the cell membrane. Its function is as follows. Retroviral envelope proteins mediate receptor recognition and membrane fusion during early infection. Endogenous envelope proteins may have kept, lost or modified their original function during evolution. Functionally, SU mediates receptor recognition. In terms of biological role, TM anchors the envelope heterodimer to the viral membrane through one transmembrane domain. The other hydrophobic domain, called fusion peptide, mediates fusion of the viral membrane with the target cell membrane. This chain is Endogenous retrovirus group K member 7 Env polyprotein (ERVK-7), found in Homo sapiens (Human).